The following is a 657-amino-acid chain: Protein translocase subunit SecA 2 (657 aa).

ATP-binding positions include Gln-93, 111 to 115 (GEGKT), and Asp-531.

Belongs to the SecA family. Monomer and homodimer. Part of the essential Sec protein translocation apparatus which comprises SecA, SecYEG and auxiliary proteins SecDF. Other proteins may also be involved.

The protein localises to the cell inner membrane. It is found in the cytoplasm. It carries out the reaction ATP + H2O + cellular proteinSide 1 = ADP + phosphate + cellular proteinSide 2.. Part of the Sec protein translocase complex. Interacts with the SecYEG preprotein conducting channel. Has a central role in coupling the hydrolysis of ATP to the transfer of proteins into and across the cell membrane, serving as an ATP-driven molecular motor driving the stepwise translocation of polypeptide chains across the membrane. The protein is Protein translocase subunit SecA 2 of Rhodopirellula baltica (strain DSM 10527 / NCIMB 13988 / SH1).